A 288-amino-acid polypeptide reads, in one-letter code: Type II restriction enzyme DpnII (288 aa).

It belongs to the DpnII type II restriction endonuclease family. As to quaternary structure, homodimer.

The catalysed reaction is Endonucleolytic cleavage of DNA to give specific double-stranded fragments with terminal 5'-phosphates.. A P subtype restriction enzyme that recognizes the double-stranded unmethylated sequence 5'-GATC-3' and cleaves before G-1. The sequence is that of Type II restriction enzyme DpnII from Streptococcus pneumoniae.